A 539-amino-acid polypeptide reads, in one-letter code: Propionyl-CoA carboxylase beta chain, mitochondrial (539 aa).

The transit peptide at 1–28 directs the protein to the mitochondrion; the sequence is MAAALRVAAVGARLSVLASGLRAAVRSL. One can recognise a CoA carboxyltransferase N-terminal domain in the interval 32–290; that stretch reads ATSVNERIEN…SSQDPAPVRE (259 aa). A carboxyltransferase region spans residues 32–533; the sequence is ATSVNERIEN…SKKVQRPWRK (502 aa). S71 carries the post-translational modification Phosphoserine. K99 is modified (N6-acetyllysine; alternate). K99 is subject to N6-succinyllysine; alternate. K248 is subject to N6-succinyllysine. The CoA carboxyltransferase C-terminal domain occupies 294–533; it reads PSDRLVPELD…SKKVQRPWRK (240 aa). Residues 325-358 form an acyl-CoA binding region; it reads DEREFFEIMPNYAKNIIVGFARMNGRTVGIVGNQ. 2 positions are modified to N6-acetyllysine; alternate: K474 and K489. Residues K474 and K489 each carry the N6-succinyllysine; alternate modification.

The protein belongs to the AccD/PCCB family. As to quaternary structure, the holoenzyme is a dodecamer composed of 6 PCCA/alpha subunits and 6 PCCB/beta subunits.

It localises to the mitochondrion matrix. The enzyme catalyses propanoyl-CoA + hydrogencarbonate + ATP = (S)-methylmalonyl-CoA + ADP + phosphate + H(+). It carries out the reaction butanoyl-CoA + hydrogencarbonate + ATP = (2S)-ethylmalonyl-CoA + ADP + phosphate + H(+). It participates in metabolic intermediate metabolism; propanoyl-CoA degradation; succinyl-CoA from propanoyl-CoA: step 1/3. Its function is as follows. This is one of the 2 subunits of the biotin-dependent propionyl-CoA carboxylase (PCC), a mitochondrial enzyme involved in the catabolism of odd chain fatty acids, branched-chain amino acids isoleucine, threonine, methionine, and valine and other metabolites. Propionyl-CoA carboxylase catalyzes the carboxylation of propionyl-CoA/propanoyl-CoA to D-methylmalonyl-CoA/(S)-methylmalonyl-CoA. Within the holoenzyme, the alpha subunit catalyzes the ATP-dependent carboxylation of the biotin carried by the biotin carboxyl carrier (BCC) domain, while the beta subunit then transfers the carboxyl group from carboxylated biotin to propionyl-CoA. Propionyl-CoA carboxylase also significantly acts on butyryl-CoA/butanoyl-CoA, which is converted to ethylmalonyl-CoA/(2S)-ethylmalonyl-CoA at a much lower rate. Other alternative minor substrates include (2E)-butenoyl-CoA/crotonoyl-CoA. The protein is Propionyl-CoA carboxylase beta chain, mitochondrial of Homo sapiens (Human).